Here is a 101-residue protein sequence, read N- to C-terminus: Small ribosomal subunit protein uS14 (101 aa).

The protein belongs to the universal ribosomal protein uS14 family. As to quaternary structure, part of the 30S ribosomal subunit. Contacts proteins S3 and S10.

In terms of biological role, binds 16S rRNA, required for the assembly of 30S particles and may also be responsible for determining the conformation of the 16S rRNA at the A site. The protein is Small ribosomal subunit protein uS14 of Brucella abortus (strain S19).